Reading from the N-terminus, the 329-residue chain is MTERPPSEAARSDPQLEGQDAAEARMAPPHLVLLNGVAKETSRAAPAEPPVIELGARSGAGGGPASGGGAARDLKGRDAVAAEARLRVPTTELCRPPGPAPAPAPASAPAELPGDGRMVQLSPPALAAPAGPGRALLYSLSQPLASLGSGFFGEPDAFPMFTNNNRVKRRPSPYEMEISDGPHTKVVRRIFTNSRERWRQQNVNGAFAELRKLIPTHPPDKKLSKNEILRLAMKYINFLAKLLNDQEEEGTQRAKPGKDPVVGAGGGGAGGGIPPEDLLQDVLSPNSSCGSSLDGAASPDSYTEEPTPKHTSRSLHPALLPAADGAGPR.

3 disordered regions span residues 1 to 28, 40 to 78, and 91 to 125; these read MTER…RMAP, ETSR…KGRD, and TELC…SPPA. A Phosphoserine modification is found at Ser-12. The span at 58 to 70 shows a compositional bias: gly residues; it reads SGAGGGPASGGGA. The span at 96 to 106 shows a compositional bias: pro residues; the sequence is PPGPAPAPAPA. Ser-122 is subject to Phosphoserine; by MAPK. Ser-172 is subject to Phosphoserine. In terms of domain architecture, bHLH spans 187–239; that stretch reads VRRIFTNSRERWRQQNVNGAFAELRKLIPTHPPDKKLSKNEILRLAMKYINFL. The tract at residues 247 to 329 is disordered; the sequence is EEEGTQRAKP…LPAADGAGPR (83 aa). Over residues 263–273 the composition is skewed to gly residues; the sequence is GAGGGGAGGGI. Residues 317–329 show a composition bias toward low complexity; sequence PALLPAADGAGPR.

In terms of assembly, efficient DNA binding requires dimerization with another bHLH protein. Forms heterodimers with TCF3. Binds to the LIM domain containing protein LMO2 and to DRG1. Can assemble in a complex with LDB1 and LMO2. Component of a TAL-1 complex composed at least of CBFA2T3, LDB1, TAL1 and TCF3. Interacts with SBNO2; this interaction inhibits TAL1 occupancy of the DCSTAMP promoter, leading to the activation of the DCSTAMP promoter by the transcription factor MITF. Phosphorylated on serine residues. Phosphorylation of Ser-122 by MAPK is strongly stimulated by hypoxia. In terms of processing, ubiquitinated; subsequent to hypoxia-dependent phosphorylation of Ser-122, ubiquitination targets the protein for rapid degradation via the ubiquitin system. This process may be characteristic for microvascular endothelial cells, since it could not be observed in large vessel endothelial cells. As to expression, erythroid and myeloid cells.

The protein resides in the nucleus. Implicated in the genesis of hemopoietic malignancies. It may play an important role in hemopoietic differentiation. Serves as a positive regulator of erythroid differentiation. The sequence is that of T-cell acute lymphocytic leukemia protein 1 homolog (Tal1) from Mus musculus (Mouse).